Here is a 92-residue protein sequence, read N- to C-terminus: Small ribosomal subunit protein bS18A (92 aa).

This sequence belongs to the bacterial ribosomal protein bS18 family. In terms of assembly, part of the 30S ribosomal subunit. Forms a tight heterodimer with protein bS6.

Functionally, binds as a heterodimer with protein bS6 to the central domain of the 16S rRNA, where it helps stabilize the platform of the 30S subunit. This chain is Small ribosomal subunit protein bS18A, found in Cupriavidus pinatubonensis (strain JMP 134 / LMG 1197) (Cupriavidus necator (strain JMP 134)).